The sequence spans 421 residues: Zinc finger protein Pegasus (421 aa).

A disordered region spans residues 35–55 (GDKEAETLQGAGTEGDQNGLD). 3 C2H2-type zinc fingers span residues 82–104 (LKCR…IRIH), 110–132 (HRCH…MRSH), and 138–161 (YKCE…RRKH). Residues 229 to 238 (SMTKSSQTSG) show a composition bias toward polar residues. 2 disordered regions span residues 229–249 (SMTK…LMVD) and 292–358 (QPAT…PTLP). Low complexity predominate over residues 292-313 (QPATPAVVSSVSASIAQSSSPT). Over residues 339–351 (HTSTPSISNSQPS) the composition is skewed to polar residues. C2H2-type zinc fingers lie at residues 366–388 (HHCQ…MGCH) and 394–418 (FQCN…RGQH).

This sequence belongs to the Ikaros C2H2-type zinc-finger protein family. In terms of assembly, probably self-associates.

The protein resides in the nucleus. Functionally, transcriptional repressor that binds the core 5'GNNTGTNG-3' DNA consensus sequence. The polypeptide is Zinc finger protein Pegasus (IKZF5) (Gallus gallus (Chicken)).